Consider the following 294-residue polypeptide: Signal peptidase I (294 aa).

The interval 1–59 is disordered; it reads MTETTDSPSERQPGPAEPELSSRDPDIAGQVFDAAPFDAAPDADSEGDSKAAKTDEPRP. At 1–66 the chain is on the cytoplasmic side; it reads MTETTDSPSE…PRPAKRSTLR (66 aa). Basic and acidic residues predominate over residues 47–59; it reads GDSKAAKTDEPRP. The helical transmembrane segment at 67-87 threads the bilayer; it reads EFAVLAVIAVVLYYVMLTFVA. Over 88 to 294 the chain is Extracellular; the sequence is RPYLIPSESM…VRSVNPQQGR (207 aa). Active-site residues include serine 96 and lysine 174.

The protein belongs to the peptidase S26 family.

It is found in the cell membrane. The enzyme catalyses Cleavage of hydrophobic, N-terminal signal or leader sequences from secreted and periplasmic proteins.. The polypeptide is Signal peptidase I (lepB) (Mycobacterium tuberculosis (strain CDC 1551 / Oshkosh)).